A 175-amino-acid chain; its full sequence is uncharacterized protein (175 aa).

A mitochondrion-targeting transit peptide spans 1–11 (METWRKGSFRN). Positions 24–92 (RRLRRQSSVL…PRLYRESSSC (69 aa)) are disordered. Basic and acidic residues predominate over residues 41–63 (GDHEEYSNREVIRELQGRPDGRR).

It is found in the mitochondrion. This is an uncharacterized protein from Homo sapiens (Human).